The chain runs to 303 residues: MYIQVLGSAAGGGFPQWNCNCVNCKGYRDGTLKATARTQSSIALSDDGVHWILCNASPDIRAQLQAFAPMQPARALRDTGINAIVLLDSQIDHTTGLLSLREGCPHQVWCTDMVHQDLTTGFPLFNMLSHWNGGLQWNRIELEGSFVIDACPNLKFTPFPLRSAAPPYSPHRFDPHPGDNLGLMVEDTRTGGKLFYAPGLGQVDEKLLAMMHGADCLLVDGTLWEDDEMQRRGVGTRTGREMGHLAQNGPGGMLEVLDGFPRQRKVLIHINNTNPILDENSPERAEVLRRGVEVAFDGMSIEL.

The protein belongs to the PqqB family.

Its pathway is cofactor biosynthesis; pyrroloquinoline quinone biosynthesis. In terms of biological role, may be involved in the transport of PQQ or its precursor to the periplasm. This chain is Coenzyme PQQ synthesis protein B, found in Pseudomonas putida (strain ATCC 47054 / DSM 6125 / CFBP 8728 / NCIMB 11950 / KT2440).